We begin with the raw amino-acid sequence, 166 residues long: 2-amino-4-hydroxy-6-hydroxymethyldihydropteridine pyrophosphokinase (166 aa).

Belongs to the HPPK family.

The enzyme catalyses 6-hydroxymethyl-7,8-dihydropterin + ATP = (7,8-dihydropterin-6-yl)methyl diphosphate + AMP + H(+). Its pathway is cofactor biosynthesis; tetrahydrofolate biosynthesis; 2-amino-4-hydroxy-6-hydroxymethyl-7,8-dihydropteridine diphosphate from 7,8-dihydroneopterin triphosphate: step 4/4. Functionally, catalyzes the transfer of pyrophosphate from adenosine triphosphate (ATP) to 6-hydroxymethyl-7,8-dihydropterin, an enzymatic step in folate biosynthesis pathway. The polypeptide is 2-amino-4-hydroxy-6-hydroxymethyldihydropteridine pyrophosphokinase (folK) (Streptococcus pyogenes serotype M6 (strain ATCC BAA-946 / MGAS10394)).